Here is a 518-residue protein sequence, read N- to C-terminus: Bifunctional purine biosynthesis protein PurH (518 aa).

Positions 1–146 constitute an MGS-like domain; the sequence is MSPIALLSVS…KNHQDVLVVT (146 aa).

This sequence belongs to the PurH family.

It catalyses the reaction (6R)-10-formyltetrahydrofolate + 5-amino-1-(5-phospho-beta-D-ribosyl)imidazole-4-carboxamide = 5-formamido-1-(5-phospho-D-ribosyl)imidazole-4-carboxamide + (6S)-5,6,7,8-tetrahydrofolate. The catalysed reaction is IMP + H2O = 5-formamido-1-(5-phospho-D-ribosyl)imidazole-4-carboxamide. It participates in purine metabolism; IMP biosynthesis via de novo pathway; 5-formamido-1-(5-phospho-D-ribosyl)imidazole-4-carboxamide from 5-amino-1-(5-phospho-D-ribosyl)imidazole-4-carboxamide (10-formyl THF route): step 1/1. Its pathway is purine metabolism; IMP biosynthesis via de novo pathway; IMP from 5-formamido-1-(5-phospho-D-ribosyl)imidazole-4-carboxamide: step 1/1. The chain is Bifunctional purine biosynthesis protein PurH from Prochlorococcus marinus (strain NATL2A).